Here is a 211-residue protein sequence, read N- to C-terminus: Protein-L-isoaspartate O-methyltransferase (211 aa).

Ser60 is a catalytic residue.

This sequence belongs to the methyltransferase superfamily. L-isoaspartyl/D-aspartyl protein methyltransferase family.

It localises to the cytoplasm. It carries out the reaction [protein]-L-isoaspartate + S-adenosyl-L-methionine = [protein]-L-isoaspartate alpha-methyl ester + S-adenosyl-L-homocysteine. Functionally, catalyzes the methyl esterification of L-isoaspartyl residues in peptides and proteins that result from spontaneous decomposition of normal L-aspartyl and L-asparaginyl residues. It plays a role in the repair and/or degradation of damaged proteins. This chain is Protein-L-isoaspartate O-methyltransferase, found in Pseudomonas savastanoi pv. phaseolicola (strain 1448A / Race 6) (Pseudomonas syringae pv. phaseolicola (strain 1448A / Race 6)).